An 879-amino-acid chain; its full sequence is Beta-mannosidase (879 aa).

The signal sequence occupies residues 1–17; that stretch reads MLLRLLLLLAPCGAGFA. N-linked (GlcNAc...) asparagine glycosylation is found at asparagine 35 and asparagine 77. An intrachain disulfide couples cysteine 167 to cysteine 176. Residue 190–192 coordinates substrate; it reads WDW. N-linked (GlcNAc...) asparagine glycosylation occurs at asparagine 297. Residue asparagine 456 participates in substrate binding. Catalysis depends on glutamate 457, which acts as the Proton donor. Cystine bridges form between cysteine 540–cysteine 629, cysteine 732–cysteine 761, and cysteine 764–cysteine 769. Glutamate 554 (nucleophile) is an active-site residue. N-linked (GlcNAc...) asparagine glycosylation occurs at asparagine 803.

It belongs to the glycosyl hydrolase 2 family. Monomer. N-glycosylated. As to expression, detected in kidney (at protein level). Found in spleen and to a lesser extent in liver. Not detected in kidney or brain.

The protein localises to the lysosome. It catalyses the reaction Hydrolysis of terminal, non-reducing beta-D-mannose residues in beta-D-mannosides.. It functions in the pathway glycan metabolism; N-glycan degradation. Exoglycosidase that cleaves the single beta-linked mannose residue from the non-reducing end of all N-linked glycoprotein oligosaccharides. In Capra hircus (Goat), this protein is Beta-mannosidase (MANBA).